We begin with the raw amino-acid sequence, 76 residues long: UPF0352 protein PC1_1633 (76 aa).

The protein belongs to the UPF0352 family.

This Pectobacterium carotovorum subsp. carotovorum (strain PC1) protein is UPF0352 protein PC1_1633.